The chain runs to 505 residues: Glutamate--tRNA ligase (505 aa).

Residues 16–26 (PSPTGFPHVGT) carry the 'HIGH' region motif. The 'KMSKS' region signature appears at 257–261 (KLSKR). K260 serves as a coordination point for ATP.

It belongs to the class-I aminoacyl-tRNA synthetase family. Glutamate--tRNA ligase type 1 subfamily. As to quaternary structure, monomer.

It is found in the cytoplasm. The enzyme catalyses tRNA(Glu) + L-glutamate + ATP = L-glutamyl-tRNA(Glu) + AMP + diphosphate. In terms of biological role, catalyzes the attachment of glutamate to tRNA(Glu) in a two-step reaction: glutamate is first activated by ATP to form Glu-AMP and then transferred to the acceptor end of tRNA(Glu). The sequence is that of Glutamate--tRNA ligase from Psychrobacter sp. (strain PRwf-1).